The following is a 233-amino-acid chain: 7-cyano-7-deazaguanine synthase (233 aa).

8 to 18 is an ATP binding site; it reads FSGGQDSTTCL. 4 residues coordinate Zn(2+): C188, C197, C200, and C203.

The protein belongs to the QueC family. Zn(2+) is required as a cofactor.

The enzyme catalyses 7-carboxy-7-deazaguanine + NH4(+) + ATP = 7-cyano-7-deazaguanine + ADP + phosphate + H2O + H(+). It participates in purine metabolism; 7-cyano-7-deazaguanine biosynthesis. Its function is as follows. Catalyzes the ATP-dependent conversion of 7-carboxy-7-deazaguanine (CDG) to 7-cyano-7-deazaguanine (preQ(0)). The chain is 7-cyano-7-deazaguanine synthase from Klebsiella pneumoniae (strain 342).